A 168-amino-acid chain; its full sequence is 2-C-methyl-D-erythritol 2,4-cyclodiphosphate synthase (168 aa).

A divalent metal cation-binding residues include Asp-15 and His-17. 4-CDP-2-C-methyl-D-erythritol 2-phosphate-binding positions include Asp-15–His-17 and His-45–Ser-46. His-53 contributes to the a divalent metal cation binding site. 4-CDP-2-C-methyl-D-erythritol 2-phosphate-binding positions include Phe-72–Asp-76, Phe-150, and Arg-153.

This sequence belongs to the IspF family. In terms of assembly, homotrimer. A divalent metal cation is required as a cofactor.

It carries out the reaction 4-CDP-2-C-methyl-D-erythritol 2-phosphate = 2-C-methyl-D-erythritol 2,4-cyclic diphosphate + CMP. The protein operates within isoprenoid biosynthesis; isopentenyl diphosphate biosynthesis via DXP pathway; isopentenyl diphosphate from 1-deoxy-D-xylulose 5-phosphate: step 4/6. Functionally, involved in the biosynthesis of isopentenyl diphosphate (IPP) and dimethylallyl diphosphate (DMAPP), two major building blocks of isoprenoid compounds. Catalyzes the conversion of 4-diphosphocytidyl-2-C-methyl-D-erythritol 2-phosphate (CDP-ME2P) to 2-C-methyl-D-erythritol 2,4-cyclodiphosphate (ME-CPP) with a corresponding release of cytidine 5-monophosphate (CMP). The polypeptide is 2-C-methyl-D-erythritol 2,4-cyclodiphosphate synthase (Anaplasma phagocytophilum (strain HZ)).